Consider the following 491-residue polypeptide: Sodium-dependent glucose transporter 1 (491 aa).

11 helical membrane passes run 26-46, 52-72, 81-101, 119-139, 165-185, 210-230, 255-275, 277-297, 303-323, 338-358, and 365-385; these read FIFVGRSMGYLGGSVLGGILF, HLLLGISMLATAAGLFVVPWC, VMSVVGMSMGFLDTGGNIIIL, FALGAFVAPILAKLALEFLPL, LSYIVIGTYILLVSLFLFILF, AVIFLLFLFFFCYVGAEVAYG, LFWGVFAAVRGLAICFATCLY, GTMLLLSVIGCTLSSLILVLF, LLWVGTAVYGASMATTFPSGF, SLFVVGAALGEMAIPASVGYL, and FPVLMYTALASSTMTAILFPV. 2 disordered regions span residues 397-425 and 438-491; these read AQYNRVESDDRRALLSSSGMEEEDEDEAQ and NDQM…EKND. A compositionally biased stretch (acidic residues) spans 416-425; that stretch reads MEEEDEDEAQ. Positions 440 to 458 are enriched in polar residues; sequence QMKNSVTVISEDTPGNSAP.

Belongs to the major facilitator superfamily.

It localises to the apical cell membrane. Functionally, may function as a sodium-dependent glucose transporter. Potential channels for urea in the inner medulla of kidney. The protein is Sodium-dependent glucose transporter 1 (mfsd4b) of Xenopus laevis (African clawed frog).